Consider the following 352-residue polypeptide: Small ribosomal subunit biogenesis GTPase RsgA 1 (352 aa).

A disordered region spans residues 1–24 (MAKKKKLTQGQVRRVRDNQQKRLK). A CP-type G domain is found at 104–272 (TSVLTRPDYY…LIDSPGVREF (169 aa)). Residues 160–163 (NKID) and 214–222 (GQSGVGKSS) each bind GTP. Residues Cys-296, Cys-301, His-303, and Cys-309 each contribute to the Zn(2+) site.

This sequence belongs to the TRAFAC class YlqF/YawG GTPase family. RsgA subfamily. As to quaternary structure, monomer. Associates with 30S ribosomal subunit, binds 16S rRNA. Requires Zn(2+) as cofactor.

It localises to the cytoplasm. Its function is as follows. One of several proteins that assist in the late maturation steps of the functional core of the 30S ribosomal subunit. Helps release RbfA from mature subunits. May play a role in the assembly of ribosomal proteins into the subunit. Circularly permuted GTPase that catalyzes slow GTP hydrolysis, GTPase activity is stimulated by the 30S ribosomal subunit. This is Small ribosomal subunit biogenesis GTPase RsgA 1 from Vibrio vulnificus (strain CMCP6).